A 160-amino-acid chain; its full sequence is 2-C-methyl-D-erythritol 2,4-cyclodiphosphate synthase (160 aa).

A divalent metal cation-binding residues include Asp-11 and His-13. Residues 11-13 and 37-38 contribute to the 4-CDP-2-C-methyl-D-erythritol 2-phosphate site; these read DVH and HS. His-45 contributes to the a divalent metal cation binding site. 4-CDP-2-C-methyl-D-erythritol 2-phosphate contacts are provided by residues 59–61, 64–68, 103–109, 135–138, Phe-142, and Arg-145; these read DIG, FPDTD, AQAPKMA, and TTTE.

This sequence belongs to the IspF family. Homotrimer. It depends on a divalent metal cation as a cofactor.

The catalysed reaction is 4-CDP-2-C-methyl-D-erythritol 2-phosphate = 2-C-methyl-D-erythritol 2,4-cyclic diphosphate + CMP. Its pathway is isoprenoid biosynthesis; isopentenyl diphosphate biosynthesis via DXP pathway; isopentenyl diphosphate from 1-deoxy-D-xylulose 5-phosphate: step 4/6. Its function is as follows. Involved in the biosynthesis of isopentenyl diphosphate (IPP) and dimethylallyl diphosphate (DMAPP), two major building blocks of isoprenoid compounds. Catalyzes the conversion of 4-diphosphocytidyl-2-C-methyl-D-erythritol 2-phosphate (CDP-ME2P) to 2-C-methyl-D-erythritol 2,4-cyclodiphosphate (ME-CPP) with a corresponding release of cytidine 5-monophosphate (CMP). The polypeptide is 2-C-methyl-D-erythritol 2,4-cyclodiphosphate synthase (Thiobacillus denitrificans (strain ATCC 25259 / T1)).